A 148-amino-acid chain; its full sequence is Proteasome chaperone 4 (148 aa).

This sequence belongs to the PSMG4 family. In terms of assembly, component of the 20S proteasome chaperone. Forms a heterodimer with IRC25 that binds to proteasome precursors. Interacts with POP2.

It localises to the cytoplasm. In terms of biological role, involved in 20S proteasome assembly, facilitating the alpha-ring formation. Involved in maintenance of telomere length. This is Proteasome chaperone 4 (POC4) from Saccharomyces cerevisiae (strain ATCC 204508 / S288c) (Baker's yeast).